Here is a 91-residue protein sequence, read N- to C-terminus: Small membrane A-kinase anchor protein (91 aa).

Gly-2 carries the N-myristoyl glycine lipid modification.

The protein belongs to the small membrane AKAP family. Post-translationally, may be palmitoylated at Cys-3.

It is found in the cell membrane. In terms of biological role, binds to type I regulatory subunits of protein kinase A and may anchor/target them to the plasma membrane. The chain is Small membrane A-kinase anchor protein from Xenopus laevis (African clawed frog).